The primary structure comprises 462 residues: N-myc proto-oncogene protein (462 aa).

The interval Leu-19–Glu-47 is interaction with AURKA. Positions Leu-61–Gly-90 are interaction with AURKA and FBXW7. The short motif at Asn-76 to Glu-85 is the 9aaTAD element. Disordered regions lie at residues Lys-134–Pro-177, Ala-232–Asn-289, and Ala-332–Gln-390. Low complexity-rich tracts occupy residues Gly-143 to Leu-176 and Ala-232 to Ser-244. Acidic residues predominate over residues Thr-257–Asp-276. Phosphoserine; by CK2 occurs at positions 259 and 261. The region spanning Glu-379–Leu-431 is the bHLH domain. A leucine-zipper region spans residues Leu-431 to Leu-452.

As to quaternary structure, efficient DNA binding requires dimerization with another bHLH protein. Binds DNA as a heterodimer with MAX. Interacts with KDM5A, KDM5B and HUWE1. Interacts with MYCNOS. Interacts with AURKA; interaction is phospho-independent and triggers AURKA activation; AURKA competes with FBXW7 for binding to unphosphorylated MYCN but not for binding to unphosphorylated MYCN. Interacts with FBXW7; FBXW7 competes with AURKA for binding to unphosphorylated MYCN but not for binding to phosphorylated MYCN. In terms of processing, phosphorylated by GSK3-beta which may promote its degradation. Phosphorylated by AURKA.

The protein resides in the nucleus. Its function is as follows. Positively regulates the transcription of MYCNOS in neuroblastoma cells. The chain is N-myc proto-oncogene protein (Mycn) from Mus musculus (Mouse).